The following is a 203-amino-acid chain: Holliday junction branch migration complex subunit RuvA (203 aa).

Residues 1–64 are domain I; the sequence is MIGRLRGIIL…EDAQLLYGFN (64 aa). The segment at 65 to 142 is domain II; the sequence is NKQERTLFKE…KGLHGDLFTP (78 aa). The interval 143–154 is flexible linker; it reads AVDLVLTSPASP. Residues 155–203 form a domain III region; it reads TSEDAEQEAVAALVALGYKPQEASRMVSKIARPDASSETLIRDALRAAL.

This sequence belongs to the RuvA family. As to quaternary structure, homotetramer. Forms an RuvA(8)-RuvB(12)-Holliday junction (HJ) complex. HJ DNA is sandwiched between 2 RuvA tetramers; dsDNA enters through RuvA and exits via RuvB. An RuvB hexamer assembles on each DNA strand where it exits the tetramer. Each RuvB hexamer is contacted by two RuvA subunits (via domain III) on 2 adjacent RuvB subunits; this complex drives branch migration. In the full resolvosome a probable DNA-RuvA(4)-RuvB(12)-RuvC(2) complex forms which resolves the HJ.

The protein resides in the cytoplasm. Its function is as follows. The RuvA-RuvB-RuvC complex processes Holliday junction (HJ) DNA during genetic recombination and DNA repair, while the RuvA-RuvB complex plays an important role in the rescue of blocked DNA replication forks via replication fork reversal (RFR). RuvA specifically binds to HJ cruciform DNA, conferring on it an open structure. The RuvB hexamer acts as an ATP-dependent pump, pulling dsDNA into and through the RuvAB complex. HJ branch migration allows RuvC to scan DNA until it finds its consensus sequence, where it cleaves and resolves the cruciform DNA. The protein is Holliday junction branch migration complex subunit RuvA of Salmonella agona (strain SL483).